Reading from the N-terminus, the 640-residue chain is Chaperone protein DnaK (640 aa).

Threonine 196 bears the Phosphothreonine; by autocatalysis mark. Positions 547–569 are enriched in basic and acidic residues; the sequence is GDKIPSDKRPALEGALEKLKDAT. 2 disordered regions span residues 547-575 and 595-640; these read GDKI…GTTE and LYQA…GNGK. Residues 603 to 615 are compositionally biased toward polar residues; it reads TNASEPTQNTDGS. A compositionally biased stretch (acidic residues) spans 625 to 634; it reads GEVENAEFEV.

Belongs to the heat shock protein 70 family.

Functionally, acts as a chaperone. This chain is Chaperone protein DnaK, found in Chlorobium phaeobacteroides (strain DSM 266 / SMG 266 / 2430).